The primary structure comprises 42 residues: uncharacterized protein (42 aa).

This is an uncharacterized protein from Dictyostelium discoideum (Social amoeba).